The sequence spans 319 residues: Curved DNA-binding protein (319 aa).

The region spanning 5 to 69 is the J domain; the sequence is DYYKILGVEP…QKRAEFDEIR (65 aa).

The protein resides in the cytoplasm. Its subcellular location is the nucleoid. Functionally, DNA-binding protein that preferentially recognizes a curved DNA sequence. It is probably a functional analog of DnaJ; displays overlapping activities with DnaJ, but functions under different conditions, probably acting as a molecular chaperone in an adaptive response to environmental stresses other than heat shock. Lacks autonomous chaperone activity; binds native substrates and targets them for recognition by DnaK. Its activity is inhibited by the binding of CbpM. In Pseudomonas putida (strain ATCC 700007 / DSM 6899 / JCM 31910 / BCRC 17059 / LMG 24140 / F1), this protein is Curved DNA-binding protein.